The primary structure comprises 262 residues: uncharacterized protein (262 aa).

Positions 6–70 constitute an S4 RNA-binding domain; sequence LRINQFLAHY…LKNKKFSVLV (65 aa). The Nucleophile role is filled by D108.

The protein belongs to the pseudouridine synthase RsuA family.

The enzyme catalyses a uridine in RNA = a pseudouridine in RNA. This is an uncharacterized protein from Helicobacter pylori (strain J99 / ATCC 700824) (Campylobacter pylori J99).